The sequence spans 640 residues: Rab proteins geranylgeranyltransferase component A (640 aa).

2 disordered regions span residues 414–439 (DILG…NNNN) and 594–640 (HNEN…EMEL). The span at 419 to 439 (NNNNNNNNNNNNNNNNNNNNN) shows a compositional bias: low complexity. Residues 604 to 624 (IDSDEDEDEDINDMNDNEEED) are compositionally biased toward acidic residues.

This sequence belongs to the Rab GDI family.

Functionally, substrate-binding subunit (component A) of the Rab geranylgeranyltransferase (GGTase) complex. Binds unprenylated Rab proteins and presents the substrate peptide to the catalytic component B. The component A is thought to be regenerated by transferring its prenylated Rab back to the donor membrane. This is Rab proteins geranylgeranyltransferase component A (MRS6) from Candida albicans (Yeast).